A 621-amino-acid chain; its full sequence is Lamin-C (621 aa).

A disordered region spans residues 1 to 47; it reads MSARRVTLNTRVSRASTSTPVGGASTSSRVGATSPTSPTRTSRQQEK. Residues 1-47 form a head region; the sequence is MSARRVTLNTRVSRASTSTPVGGASTSSRVGATSPTSPTRTSRQQEK. The span at 7–31 shows a compositional bias: polar residues; the sequence is TLNTRVSRASTSTPVGGASTSSRVG. Residues 33–42 are compositionally biased toward low complexity; that stretch reads TSPTSPTRTS. Serine 34 carries the post-translational modification Phosphoserine. The IF rod domain maps to 46–402; that stretch reads EKEELQHLND…KLLCGEERRL (357 aa). Residues 47–85 are coil 1A; the sequence is KEELQHLNDRLACYIDRMRNLENENSRLTQELNLAQDTV. The tract at residues 86 to 95 is linker 1; it reads NRETSNLKAV. The interval 96-233 is coil 1B; sequence YEKELAAARK…QVHTQELTET (138 aa). The linker 2 stretch occupies residues 234–257; the sequence is RSRRQIEISEIDGRLSRQYEAKLQ. The interval 258–403 is coil 2; it reads QSLQELRDQY…LLCGEERRLN (146 aa). A disordered region spans residues 404-458; that stretch reads IESPGRPTTDSGISSNGSHLTASASSRSGRVTPSGRRSATPGISGSSAVKRRRTV. The interval 404 to 621 is tail; sequence IESPGRPTTD…GVRSLFSLLF (218 aa). Serine 406 and serine 441 each carry phosphoserine. A compositionally biased stretch (polar residues) spans 409 to 450; the sequence is RPTTDSGISSNGSHLTASASSRSGRVTPSGRRSATPGISGSS. Threonine 443 bears the Phosphothreonine mark. The Nuclear localization signal motif lies at 453–458; it reads KRRRTV. The LTD domain occupies 468 to 582; the sequence is SEYSVNAAAK…EDVASYDRVR (115 aa). The interval 585–605 is disordered; it reads VSSHTSRHRSSGTPSTGFTLG.

Belongs to the intermediate filament family. As to quaternary structure, interacts with MAN1. First detected from late stage 12 in the oenocytes, abdominal segments, hindgut and posterior spiracles, with expression increasing in stage 13 (at protein level). In stage 14, also becomes detectable in the foregut (at protein level). Stage 15 shows expression in the epidermis, dorsal longitudinal trunk, pharynx, esophagus and proventriculus, with the dorsal pharyngeal musculature showing expression in late stage 15 (at protein level). In stage 16 embryos, also detected in the exit glia with increasing expression in the somatic musculature (at protein level). Also detected in the visceral mesoderm but not in the midgut or central nervous system until the end of embryogenesis (at protein level). In third instar larvae, detectable at varying levels in all cell types (at protein level). Expressed in spermatocytes (at protein level).

Its subcellular location is the nucleus. It localises to the nucleus lamina. Functionally, lamins are components of the nuclear lamina, a fibrous layer on the nucleoplasmic side of the inner nuclear membrane, which is thought to provide a framework for the nuclear envelope and may also interact with chromatin. In spermatocytes, regulates cytokinesis during meiosis. In Drosophila melanogaster (Fruit fly), this protein is Lamin-C (LamC).